The following is a 406-amino-acid chain: Putative nickel insertion protein (406 aa).

It belongs to the LarC family.

This is Putative nickel insertion protein from Thermomicrobium roseum (strain ATCC 27502 / DSM 5159 / P-2).